We begin with the raw amino-acid sequence, 486 residues long: 23S rRNA (uracil(1939)-C(5))-methyltransferase RlmD (486 aa).

The region spanning 10–71 is the TRAM domain; that stretch reads TVKAPEYLPD…SSFEKAVVMA (62 aa). Residues Cys84, Cys94, Cys97, and Cys176 each coordinate [4Fe-4S] cluster. 6 residues coordinate S-adenosyl-L-methionine: Gln285, Phe314, Asn319, Glu335, Asn370, and Asp391. Residue Cys442 is the Nucleophile of the active site.

This sequence belongs to the class I-like SAM-binding methyltransferase superfamily. RNA M5U methyltransferase family. RlmD subfamily.

The enzyme catalyses uridine(1939) in 23S rRNA + S-adenosyl-L-methionine = 5-methyluridine(1939) in 23S rRNA + S-adenosyl-L-homocysteine + H(+). Functionally, catalyzes the formation of 5-methyl-uridine at position 1939 (m5U1939) in 23S rRNA. This Polaromonas sp. (strain JS666 / ATCC BAA-500) protein is 23S rRNA (uracil(1939)-C(5))-methyltransferase RlmD.